Consider the following 637-residue polypeptide: MNPSPLLDLIDSPQDLRRLDKKQLPRLAGELRAFLLESVGQTGGHFASNLGAVELTIALHYVYDTPEDKLVWDVGHQSYPHKILTGRKNQMHTMRQYGGLAGFPKRSESEYDAFGVGHSSTSIGAALGMAVADKQLGNNRRSVAIIGDGAMTAGQAFEALNCAGDMDVDLLVVLNDNEMSISPNVGALPKYLASNVVRDMHGLLSTVKAQTGKVLDKIPGAMEFAQKVEHKIKTLAEEAEHAKQSLSLFENFGFRYTGPVDGHNVENLVDVLKDLRSRKGPQLLHVITKKGNGYKLAENDPVKYHAVAKLPKEGAAQMPSEKEPKPVAKPTYTQVFGKWLCDRAAADERLIAITPAMREGSGLVEFEQRFPDRYFDVGIAEQHAVTFAGGLACEGMKPVVAIYSTFLQRAYDQLVHDIALQNLPVLFAVDRAGIVGADGPTHAGLYDLSFLRCIPNMIVAAPSDENECRLLLSTCYQADAPAAVRYPRGTGTGAPVSDGMETVEIGKGIIRREGGKTAFIAFGSMVAPALAVAGKLNATVADMRFVKPIDEELIVRLARSHDRIVTLEENAEQGGAGGAVLEVLAKHGICKPVLLLGVADTVTGHGDPKKLLDDLGLSAEAVERRVRAWLSDRDAAN.

Thiamine diphosphate is bound by residues H76 and 117 to 119 (GHS). D148 lines the Mg(2+) pocket. Thiamine diphosphate-binding positions include 149–150 (GA), N177, Y294, and E381. N177 lines the Mg(2+) pocket.

The protein belongs to the transketolase family. DXPS subfamily. Homodimer. Mg(2+) serves as cofactor. It depends on thiamine diphosphate as a cofactor.

The enzyme catalyses D-glyceraldehyde 3-phosphate + pyruvate + H(+) = 1-deoxy-D-xylulose 5-phosphate + CO2. It functions in the pathway metabolic intermediate biosynthesis; 1-deoxy-D-xylulose 5-phosphate biosynthesis; 1-deoxy-D-xylulose 5-phosphate from D-glyceraldehyde 3-phosphate and pyruvate: step 1/1. Catalyzes the acyloin condensation reaction between C atoms 2 and 3 of pyruvate and glyceraldehyde 3-phosphate to yield 1-deoxy-D-xylulose-5-phosphate (DXP). The polypeptide is 1-deoxy-D-xylulose-5-phosphate synthase (Neisseria meningitidis serogroup C / serotype 2a (strain ATCC 700532 / DSM 15464 / FAM18)).